Here is a 538-residue protein sequence, read N- to C-terminus: Chaperonin GroEL 2 (538 aa).

Residues 29-32 (TLGP), 86-90 (DGTTT), glycine 412, 479-481 (NAA), and aspartate 495 contribute to the ATP site.

Belongs to the chaperonin (HSP60) family. In terms of assembly, forms a cylinder of 14 subunits composed of two heptameric rings stacked back-to-back. Interacts with the co-chaperonin GroES.

It localises to the cytoplasm. The catalysed reaction is ATP + H2O + a folded polypeptide = ADP + phosphate + an unfolded polypeptide.. In terms of biological role, together with its co-chaperonin GroES, plays an essential role in assisting protein folding. The GroEL-GroES system forms a nano-cage that allows encapsulation of the non-native substrate proteins and provides a physical environment optimized to promote and accelerate protein folding. The polypeptide is Chaperonin GroEL 2 (Renibacterium salmoninarum (strain ATCC 33209 / DSM 20767 / JCM 11484 / NBRC 15589 / NCIMB 2235)).